A 157-amino-acid polypeptide reads, in one-letter code: Protein NrdI (157 aa).

The protein belongs to the NrdI family.

Its function is as follows. Probably involved in ribonucleotide reductase function. The sequence is that of Protein NrdI from Mycoplasma mycoides subsp. mycoides SC (strain CCUG 32753 / NCTC 10114 / PG1).